The following is a 113-amino-acid chain: Nucleoid-associated protein CLJ_B0037 (113 aa).

The segment covering 93 to 102 has biased composition (basic and acidic residues); sequence EEDTSSEVKR. The tract at residues 93–113 is disordered; the sequence is EEDTSSEVKRLTGGMNLPGMF.

It belongs to the YbaB/EbfC family. In terms of assembly, homodimer.

The protein localises to the cytoplasm. Its subcellular location is the nucleoid. Functionally, binds to DNA and alters its conformation. May be involved in regulation of gene expression, nucleoid organization and DNA protection. This Clostridium botulinum (strain 657 / Type Ba4) protein is Nucleoid-associated protein CLJ_B0037.